The chain runs to 94 residues: uncharacterized protein (94 aa).

This is an uncharacterized protein from Haemophilus influenzae (strain ATCC 51907 / DSM 11121 / KW20 / Rd).